A 246-amino-acid chain; its full sequence is Ribonuclease 3 (246 aa).

One can recognise an RNase III domain in the interval 18 to 147 (FKELQKKIGI…FIGALYLDQG (130 aa)). Glutamate 60 provides a ligand contact to Mg(2+). The active site involves aspartate 64. Mg(2+)-binding residues include aspartate 133 and glutamate 136. The active site involves glutamate 136. The region spanning 173-242 (DFKSQLQELV…AQMALQKLKT (70 aa)) is the DRBM domain.

The protein belongs to the ribonuclease III family. In terms of assembly, homodimer. The cofactor is Mg(2+).

It is found in the cytoplasm. It carries out the reaction Endonucleolytic cleavage to 5'-phosphomonoester.. In terms of biological role, digests double-stranded RNA. Involved in the processing of primary rRNA transcript to yield the immediate precursors to the large and small rRNAs (23S and 16S). Processes some mRNAs, and tRNAs when they are encoded in the rRNA operon. Processes pre-crRNA and tracrRNA of type II CRISPR loci if present in the organism. In Geobacillus sp. (strain WCH70), this protein is Ribonuclease 3.